The following is a 243-amino-acid chain: UPF0758 protein sll0766 (243 aa).

The MPN domain maps to 113–235 (VVDSPEAAAI…HQSLRQCTDL (123 aa)). Zn(2+)-binding residues include histidine 184, histidine 186, and aspartate 197. A JAMM motif motif is present at residues 184–197 (HNHPSGGLEPSPED).

It belongs to the UPF0758 family.

This chain is UPF0758 protein sll0766, found in Synechocystis sp. (strain ATCC 27184 / PCC 6803 / Kazusa).